A 138-amino-acid polypeptide reads, in one-letter code: NADH-quinone oxidoreductase subunit A 1 (138 aa).

3 helical membrane-spanning segments follow: residues 19 to 39, 74 to 94, and 103 to 123; these read FLPL…LLLA, FYLI…IFAW, and LAGL…LVWL.

This sequence belongs to the complex I subunit 3 family. In terms of assembly, NDH-1 is composed of 14 different subunits. Subunits NuoA, H, J, K, L, M, N constitute the membrane sector of the complex.

It localises to the cell inner membrane. It catalyses the reaction a quinone + NADH + 5 H(+)(in) = a quinol + NAD(+) + 4 H(+)(out). In terms of biological role, NDH-1 shuttles electrons from NADH, via FMN and iron-sulfur (Fe-S) centers, to quinones in the respiratory chain. The immediate electron acceptor for the enzyme in this species is believed to be ubiquinone. Couples the redox reaction to proton translocation (for every two electrons transferred, four hydrogen ions are translocated across the cytoplasmic membrane), and thus conserves the redox energy in a proton gradient. This Geobacter metallireducens (strain ATCC 53774 / DSM 7210 / GS-15) protein is NADH-quinone oxidoreductase subunit A 1.